A 334-amino-acid polypeptide reads, in one-letter code: Galactinol synthase 4 (334 aa).

K104 is a catalytic residue. Residues D120, D122, and H258 each coordinate Mn(2+).

This sequence belongs to the glycosyltransferase 8 family. Galactosyltransferase subfamily. A divalent metal cation is required as a cofactor.

The protein localises to the cytoplasm. The enzyme catalyses myo-inositol + UDP-alpha-D-galactose = alpha-D-galactosyl-(1-&gt;3)-1D-myo-inositol + UDP + H(+). Galactinol synthase involved in the biosynthesis of raffinose family oligosaccharides (RFOs) that function as osmoprotectants. May promote plant stress tolerance. The chain is Galactinol synthase 4 (GOLS4) from Arabidopsis thaliana (Mouse-ear cress).